Here is a 644-residue protein sequence, read N- to C-terminus: 3D-(3,5/4)-trihydroxycyclohexane-1,2-dione hydrolase (644 aa).

Glutamate 65 provides a ligand contact to thiamine diphosphate. Residues serine 442–glycine 522 form a thiamine pyrophosphate binding region. Aspartate 493 and asparagine 520 together coordinate Mg(2+).

Belongs to the TPP enzyme family. It depends on Mg(2+) as a cofactor. Thiamine diphosphate is required as a cofactor.

It carries out the reaction 3D-3,5/4-trihydroxycyclohexane-1,2-dione + H2O = 5-deoxy-D-glucuronate + H(+). It functions in the pathway polyol metabolism; myo-inositol degradation into acetyl-CoA; acetyl-CoA from myo-inositol: step 3/7. In terms of biological role, involved in the cleavage of the C1-C2 bond of 3D-(3,5/4)-trihydroxycyclohexane-1,2-dione (THcHDO) to yield 5-deoxy-glucuronate (5DG). This Bacillus anthracis (strain A0248) protein is 3D-(3,5/4)-trihydroxycyclohexane-1,2-dione hydrolase.